A 461-amino-acid chain; its full sequence is Chromosomal replication initiator protein DnaA (461 aa).

The segment at 1–90 is domain I, interacts with DnaA modulators; the sequence is MAVSLWQQCI…RPSARPVAPA (90 aa). Residues 91–124 are domain II; that stretch reads PVAAKPVNRQTKAQVGTTSFNTQAEPIINPNHRS. The domain III, AAA+ region stretch occupies residues 125–341; it reads NINPTYQFDN…GALNRVIANA (217 aa). Residues glycine 169, glycine 171, lysine 172, and threonine 173 each contribute to the ATP site. The domain IV, binds dsDNA stretch occupies residues 342–461; the sequence is NFTGRPITID…YANLIRTLSS (120 aa).

It belongs to the DnaA family. Oligomerizes as a right-handed, spiral filament on DNA at oriC.

It is found in the cytoplasm. Functionally, plays an essential role in the initiation and regulation of chromosomal replication. ATP-DnaA binds to the origin of replication (oriC) to initiate formation of the DNA replication initiation complex once per cell cycle. Binds the DnaA box (a 9 base pair repeat at the origin) and separates the double-stranded (ds)DNA. Forms a right-handed helical filament on oriC DNA; dsDNA binds to the exterior of the filament while single-stranded (ss)DNA is stabiized in the filament's interior. The ATP-DnaA-oriC complex binds and stabilizes one strand of the AT-rich DNA unwinding element (DUE), permitting loading of DNA polymerase. After initiation quickly degrades to an ADP-DnaA complex that is not apt for DNA replication. Binds acidic phospholipids. The protein is Chromosomal replication initiator protein DnaA of Shewanella frigidimarina (strain NCIMB 400).